The following is a 706-amino-acid chain: Probable rhamnogalacturonate lyase B (706 aa).

A signal peptide spans 1 to 19 (MRLLHPLIPASLLLTLTSA). N27, N40, N143, N239, N285, N380, N495, N569, N597, and N638 each carry an N-linked (GlcNAc...) asparagine glycan.

This sequence belongs to the polysaccharide lyase 4 family.

It localises to the secreted. The enzyme catalyses Endotype eliminative cleavage of L-alpha-rhamnopyranosyl-(1-&gt;4)-alpha-D-galactopyranosyluronic acid bonds of rhamnogalacturonan I domains in ramified hairy regions of pectin leaving L-rhamnopyranose at the reducing end and 4-deoxy-4,5-unsaturated D-galactopyranosyluronic acid at the non-reducing end.. Functionally, pectinolytic enzymes consist of four classes of enzymes: pectin lyase, polygalacturonase, pectin methylesterase and rhamnogalacturonase. Degrades the rhamnogalacturonan I (RG-I) backbone of pectin. The chain is Probable rhamnogalacturonate lyase B (rglB) from Aspergillus niger (strain ATCC MYA-4892 / CBS 513.88 / FGSC A1513).